A 115-amino-acid chain; its full sequence is Large ribosomal subunit protein bL20 (115 aa).

It belongs to the bacterial ribosomal protein bL20 family.

Binds directly to 23S ribosomal RNA and is necessary for the in vitro assembly process of the 50S ribosomal subunit. It is not involved in the protein synthesizing functions of that subunit. The polypeptide is Large ribosomal subunit protein bL20 (Chlorobium phaeobacteroides (strain DSM 266 / SMG 266 / 2430)).